A 210-amino-acid chain; its full sequence is 3-phospho-D-glycerate guanylyltransferase (210 aa).

It belongs to the CofC family.

It carries out the reaction (2R)-3-phosphoglycerate + GTP + H(+) = 3-[(R)-glyceryl]-diphospho-5'-guanosine + diphosphate. It functions in the pathway cofactor biosynthesis; coenzyme F420 biosynthesis. Its function is as follows. Guanylyltransferase that catalyzes the activation of (2R)-3-phosphoglycerate (3PG) as 3-[(R)-glyceryl]-diphospho-5'-guanosine, via the condensation of 3PG with GTP. It is involved in the biosynthesis of a derivative of the hydride carrier cofactor coenzyme F420, 3PG-F420. The chain is 3-phospho-D-glycerate guanylyltransferase from Colwellia psychrerythraea (strain 34H / ATCC BAA-681) (Vibrio psychroerythus).